The following is a 248-amino-acid chain: Probable transcriptional regulatory protein RL3983 (248 aa).

It belongs to the TACO1 family.

The protein resides in the cytoplasm. The protein is Probable transcriptional regulatory protein RL3983 of Rhizobium johnstonii (strain DSM 114642 / LMG 32736 / 3841) (Rhizobium leguminosarum bv. viciae).